Reading from the N-terminus, the 503-residue chain is Dihydropyrimidinase (503 aa).

His66, His68, and Lys158 together coordinate Zn(2+). Lys158 carries the post-translational modification N6-carboxylysine. A substrate-binding site is contributed by Tyr163. Zn(2+)-binding residues include His191, His247, and Asp325. Asn346 serves as a coordination point for substrate.

It belongs to the metallo-dependent hydrolases superfamily. Hydantoinase/dihydropyrimidinase family. In terms of assembly, homotetramer. The cofactor is Zn(2+). Post-translationally, carboxylation allows a single lysine to coordinate two zinc ions.

The catalysed reaction is 5,6-dihydrouracil + H2O = 3-(carbamoylamino)propanoate + H(+). In terms of biological role, catalyzes the second step of the reductive pyrimidine degradation, the reversible hydrolytic ring opening of dihydropyrimidines. Can catalyze the ring opening of 5,6-dihydrouracil to N-carbamyl-alanine and of 5,6-dihydrothymine to N-carbamyl-amino isobutyrate. This is Dihydropyrimidinase (pyd2) from Dictyostelium discoideum (Social amoeba).